The sequence spans 1011 residues: Beta-galactosidase A (1011 aa).

An N-terminal signal peptide occupies residues 1-19; sequence MKLLSSWVVAALAAQAAGA. Substrate contacts are provided by residues Tyr96, 140-142, and Asn199; that span reads NAE. The Proton donor role is filled by Glu200. Disulfide bonds link Cys205–Cys206 and Cys267–Cys316. Residue Glu299 is the Nucleophile of the active site. Tyr365 serves as a coordination point for substrate. N-linked (GlcNAc...) asparagine glycosylation is found at Asn374, Asn456, Asn625, Asn707, Asn763, Asn780, and Asn917.

This sequence belongs to the glycosyl hydrolase 35 family. Monomer.

The protein localises to the secreted. The enzyme catalyses Hydrolysis of terminal non-reducing beta-D-galactose residues in beta-D-galactosides.. Cleaves beta-linked terminal galactosyl residues from gangliosides, glycoproteins, and glycosaminoglycans. Has high in vitro transglycosylation activity with p-nitrophenyl-beta-D-galactopyranoside, methyl-beta-D-galactopyranoside or lactose as a donor and galactose as an acceptor. This is Beta-galactosidase A (lacA) from Penicillium sp.